The sequence spans 572 residues: Hsp70-Hsp90 organizing protein 1 (572 aa).

TPR repeat units follow at residues 2–35 (AEEAKAKGNAAFSSGDFTTAINHFTEAIALAPTN), 37–69 (VLFSNRSAAHASLHQYAEALSDAKETIKLKPYW), and 70–103 (PKGYSRLGAAHLGLNQFELAVTAYKKGLDVDPTN). The region spanning 133-172 (GPEMWTKLTSDPSTRGFLQQPDFVNMMQEIQKNPSSLNLY) is the STI1 1 domain. Serine 167 carries the post-translational modification Phosphoserine. The interval 189-248 (KFRPPPPQGDEAEVPESDMGQSSSNEPEVEKKREPEPEPEPEVTEEKEKKERKEKAKKEK) is disordered. Positions 232-248 (TEEKEKKERKEKAKKEK) are enriched in basic and acidic residues. The Bipartite nuclear localization signal signature appears at 241–258 (KEKAKKEKELGNAAYKKK). TPR repeat units lie at residues 244–277 (AKKEKELGNAAYKKKDFETAIQHYSTAIEIDDED), 279–311 (SYLTNRAAVYLEMGKYNECIEDCNKAVERGREL), 319–356 (ARALTRKGTALTKMAKCSKDYEPAIEAFQKALTEHRNP), 358–382 (TLKRLNDAERAKKEWEQKQYFDPKL), 383–416 (GDEEREKGNDFFKEQKYPEAIKHYTEAIKRNPND), 418–450 (KAYSNRAASYTKLGAMPEGLKDAEKCIELDPTF), and 451–484 (SKGYSRKAAVQFFLKEYDNAMETYQAGLEHDPSN). One can recognise an STI1 2 domain in the interval 521 to 560 (DPEIQNILTDPVMRQVLSDLQENPSAAQKHMQNPMVMNKI).

As to quaternary structure, co-chaperone that forms a complex with HSP70 and HSP90 and preproteins (e.g. chloroplast preproteins). Post-translationally, phosphorylated. In terms of processing, acetylated.

It is found in the cytoplasm. Its subcellular location is the nucleus. Its function is as follows. Mediates the association of the molecular chaperones HSP70 and HSP90. Mediates nuclear encoded chloroplast preproteins binding to HSP90 prior to chloroplastic sorting. This Arabidopsis thaliana (Mouse-ear cress) protein is Hsp70-Hsp90 organizing protein 1 (HOP1).